The following is a 479-amino-acid chain: Aspartyl/glutamyl-tRNA(Asn/Gln) amidotransferase subunit B (479 aa).

It belongs to the GatB/GatE family. GatB subfamily. In terms of assembly, heterotrimer of A, B and C subunits.

It carries out the reaction L-glutamyl-tRNA(Gln) + L-glutamine + ATP + H2O = L-glutaminyl-tRNA(Gln) + L-glutamate + ADP + phosphate + H(+). The catalysed reaction is L-aspartyl-tRNA(Asn) + L-glutamine + ATP + H2O = L-asparaginyl-tRNA(Asn) + L-glutamate + ADP + phosphate + 2 H(+). Functionally, allows the formation of correctly charged Asn-tRNA(Asn) or Gln-tRNA(Gln) through the transamidation of misacylated Asp-tRNA(Asn) or Glu-tRNA(Gln) in organisms which lack either or both of asparaginyl-tRNA or glutaminyl-tRNA synthetases. The reaction takes place in the presence of glutamine and ATP through an activated phospho-Asp-tRNA(Asn) or phospho-Glu-tRNA(Gln). The sequence is that of Aspartyl/glutamyl-tRNA(Asn/Gln) amidotransferase subunit B from Geobacter sp. (strain M21).